We begin with the raw amino-acid sequence, 524 residues long: Tyrosine-protein kinase HCK (524 aa).

The disordered stretch occupies residues 1-72 (MGGRSSCEDP…NNSNSMPPGF (72 aa)). The N-myristoyl glycine moiety is linked to residue Gly-2. Residue Gly-3 is the site of S-palmitoyl cysteine attachment. Basic and acidic residues predominate over residues 29-38 (FLRDGSKASK). Tyr-50 is subject to Phosphotyrosine; by autocatalysis. Residues 54–68 (PTSSSKLGPNNSNSM) show a composition bias toward polar residues. The 61-residue stretch at 76–136 (SEDTIVVALY…PSNYVARVNS (61 aa)) folds into the SH3 domain. One can recognise an SH2 domain in the interval 142–239 (WFFKGISRKD…GLCQKLSVPC (98 aa)). Residue Thr-200 is modified to Phosphothreonine. A Phosphotyrosine modification is found at Tyr-207. Residues 260–513 (LQMEKKLGAG…YIQSVLDDFY (254 aa)) enclose the Protein kinase domain. Residues 266-274 (LGAGQFGEV) and Lys-288 each bind ATP. Residue Asp-379 is the Proton acceptor of the active site. Phosphotyrosine; by autocatalysis is present on Tyr-409. Residue Ser-460 is modified to Phosphoserine. Phosphotyrosine is present on Tyr-520.

The protein belongs to the protein kinase superfamily. Tyr protein kinase family. SRC subfamily. As to quaternary structure, interacts with ADAM15. Interacts with FASLG. Interacts with ARRB1 and ARRB2. Interacts with FCGR1A; the interaction may be indirect. Interacts with IL6ST. Interacts (via SH3 domain) with ELMO1. Interacts (via SH3 domain) with TP73. Interacts with YAP1. Interacts with ABL1 and ITGB1, and thereby recruits ABL1 to activated ITGB1. Interacts (via SH2 domain) with FLT3 (tyrosine phosphorylated). Interacts with CBL. Interacts with VAV1, WAS and RAPGEF1. Interacts (via SH3 domain) with WDCP. In terms of processing, phosphorylated on several tyrosine residues. Autophosphorylated. Becomes rapidly phosphorylated upon activation of the immunoglobulin receptors FCGR1A and FCGR2A. Phosphorylation at Tyr-409 increases kinase activity. Phosphorylation at Tyr-520 inhibits kinase activity. Kinase activity is not required for phosphorylation at Tyr-520, suggesting that this site may be a target of other kinases. Ubiquitinated by CBL, leading to its degradation via the proteasome. Post-translationally, isoform 2 palmitoylation at position 2 requires prior myristoylation. Palmitoylation at position 3 is required for caveolar localization of isoform 2. In terms of tissue distribution, expressed predominantly in cells of the myeloid and B-lymphoid lineages.

The protein resides in the cytoplasmic vesicle. It localises to the secretory vesicle. The protein localises to the cytoplasm. Its subcellular location is the cytosol. It is found in the membrane. The protein resides in the caveola. It localises to the lysosome. The protein localises to the cell projection. Its subcellular location is the podosome membrane. It is found in the cell membrane. The protein resides in the cell junction. It localises to the focal adhesion. The protein localises to the cytoskeleton. Its subcellular location is the golgi apparatus. It is found in the nucleus. The catalysed reaction is L-tyrosyl-[protein] + ATP = O-phospho-L-tyrosyl-[protein] + ADP + H(+). Its activity is regulated as follows. Subject to autoinhibition, mediated by intramolecular interactions involving the SH2 and SH3 domains. Kinase activity is also regulated by phosphorylation at regulatory tyrosine residues. Phosphorylation at Tyr-409 is required for optimal activity. Phosphorylation at Tyr-520 inhibits kinase activity. Inhibited by PP1. Non-receptor tyrosine-protein kinase found in hematopoietic cells that transmits signals from cell surface receptors and plays an important role in the regulation of innate immune responses, including neutrophil, monocyte, macrophage and mast cell functions, phagocytosis, cell survival and proliferation, cell adhesion and migration. Acts downstream of receptors that bind the Fc region of immunoglobulins, such as FCGR1A and FCGR2A, but also CSF3R, PLAUR, the receptors for IFNG, IL2, IL6 and IL8, and integrins, such as ITGB1 and ITGB2. During the phagocytic process, mediates mobilization of secretory lysosomes, degranulation, and activation of NADPH oxidase to bring about the respiratory burst. Plays a role in the release of inflammatory molecules. Promotes reorganization of the actin cytoskeleton and actin polymerization, formation of podosomes and cell protrusions. Inhibits TP73-mediated transcription activation and TP73-mediated apoptosis. Phosphorylates CBL in response to activation of immunoglobulin gamma Fc region receptors. Phosphorylates ADAM15, BCR, ELMO1, FCGR2A, GAB1, GAB2, RAPGEF1, STAT5B, TP73, VAV1 and WAS. This Mus musculus (Mouse) protein is Tyrosine-protein kinase HCK (Hck).